The following is a 455-amino-acid chain: tRNA modification GTPase MnmE (455 aa).

(6S)-5-formyl-5,6,7,8-tetrahydrofolate-binding residues include K29, E91, and R131. In terms of domain architecture, TrmE-type G spans 226 to 378 (GLKVALVGLP…LIQELLKLAG (153 aa)). N236 lines the K(+) pocket. GTP is bound by residues 236–241 (NVGKSS), 255–261 (TDLPGTT), 280–283 (DTAG), and 341–344 (NKAD). Residue S240 participates in Mg(2+) binding. 3 residues coordinate K(+): T255, L257, and T260. Mg(2+) is bound at residue T261. K455 provides a ligand contact to (6S)-5-formyl-5,6,7,8-tetrahydrofolate.

This sequence belongs to the TRAFAC class TrmE-Era-EngA-EngB-Septin-like GTPase superfamily. TrmE GTPase family. In terms of assembly, homodimer. Heterotetramer of two MnmE and two MnmG subunits. Requires K(+) as cofactor.

The protein resides in the cytoplasm. Exhibits a very high intrinsic GTPase hydrolysis rate. Involved in the addition of a carboxymethylaminomethyl (cmnm) group at the wobble position (U34) of certain tRNAs, forming tRNA-cmnm(5)s(2)U34. The protein is tRNA modification GTPase MnmE of Prochlorococcus marinus (strain SARG / CCMP1375 / SS120).